Reading from the N-terminus, the 836-residue chain is Granulocyte colony-stimulating factor receptor (836 aa).

Positions 1–24 are cleaved as a signal peptide; it reads MARLGNCSLTWAALIILLLPGSLE. Positions 25–117 constitute an Ig-like C2-type domain; sequence ECGHISVSAP…SLQILDQVEL (93 aa). Residues 25–627 lie on the Extracellular side of the membrane; the sequence is ECGHISVSAP…TLTPEGSELH (603 aa). 2 disulfides stabilise this stretch: cysteine 26-cysteine 52 and cysteine 46-cysteine 101. N-linked (GlcNAc...) asparagine glycosylation is found at asparagine 51, asparagine 93, asparagine 128, and asparagine 134. 5 consecutive Fibronectin type-III domains span residues 125–230, 233–332, 334–430, 431–528, and 530–623; these read IPHN…LEPP, RTMD…TTER, PTVR…SRGP, ALTR…MAPS, and APEL…TPEG. Disulfide bonds link cysteine 131-cysteine 142, cysteine 167-cysteine 218, cysteine 177-cysteine 186, cysteine 248-cysteine 295, and cysteine 266-cysteine 309. A WSXWS motif motif is present at residues 318 to 322; it reads WSDWS. Residues asparagine 389, asparagine 474, asparagine 579, and asparagine 610 are each glycosylated (N-linked (GlcNAc...) asparagine). The chain crosses the membrane as a helical span at residues 628-650; the sequence is IILGLFGLLLLLTCLCGTAWLCC. Residues 651–836 are Cytoplasmic-facing; it reads SPNRKNPLWP…VHGMEALGSF (186 aa). The short motif at 658–666 is the Box 1 motif element; the sequence is LWPSVPDPA.

Belongs to the type I cytokine receptor family. Type 2 subfamily. As to quaternary structure, homodimer. The dimeric receptor binds two CSF3 molecules. Interacts with CEACAM1; down-regulates the CSF3R-STAT3 pathway through recruitment of PTPN6 that dephosphorylates CSF3R. In terms of processing, N-glycosylated. In terms of tissue distribution, one or several isoforms have been found in myelogenous leukemia cell line KG-1, leukemia U-937 cell line, in bone marrow cells, placenta, and peripheral blood granulocytes. Isoform GCSFR-2 is found only in leukemia U-937 cells. Isoform GCSFR-3 is highly expressed in placenta.

It localises to the secreted. The protein resides in the cell membrane. Receptor for granulocyte colony-stimulating factor (CSF3), essential for granulocytic maturation. Plays a crucial role in the proliferation, differentiation and survival of cells along the neutrophilic lineage. In addition it may function in some adhesion or recognition events at the cell surface. This Homo sapiens (Human) protein is Granulocyte colony-stimulating factor receptor (CSF3R).